A 284-amino-acid polypeptide reads, in one-letter code: Bifunctional protein FolD (284 aa).

NADP(+) contacts are provided by residues Gly166–Ser168 and Ile232.

The protein belongs to the tetrahydrofolate dehydrogenase/cyclohydrolase family. As to quaternary structure, homodimer.

It carries out the reaction (6R)-5,10-methylene-5,6,7,8-tetrahydrofolate + NADP(+) = (6R)-5,10-methenyltetrahydrofolate + NADPH. The enzyme catalyses (6R)-5,10-methenyltetrahydrofolate + H2O = (6R)-10-formyltetrahydrofolate + H(+). The protein operates within one-carbon metabolism; tetrahydrofolate interconversion. Its function is as follows. Catalyzes the oxidation of 5,10-methylenetetrahydrofolate to 5,10-methenyltetrahydrofolate and then the hydrolysis of 5,10-methenyltetrahydrofolate to 10-formyltetrahydrofolate. The sequence is that of Bifunctional protein FolD from Shewanella pealeana (strain ATCC 700345 / ANG-SQ1).